The following is a 240-amino-acid chain: Orotidine 5'-phosphate decarboxylase (240 aa).

Residues Asp-15, Lys-37, 64–73 (DLKYHDIPNT), Thr-127, Arg-188, Gln-197, Gly-217, and Arg-218 contribute to the substrate site. Lys-66 (proton donor) is an active-site residue.

Belongs to the OMP decarboxylase family. Type 1 subfamily. Homodimer.

It carries out the reaction orotidine 5'-phosphate + H(+) = UMP + CO2. The protein operates within pyrimidine metabolism; UMP biosynthesis via de novo pathway; UMP from orotate: step 2/2. In terms of biological role, catalyzes the decarboxylation of orotidine 5'-monophosphate (OMP) to uridine 5'-monophosphate (UMP). This Geobacter sp. (strain M21) protein is Orotidine 5'-phosphate decarboxylase.